Consider the following 214-residue polypeptide: Large ribosomal subunit protein uL3 (214 aa).

Residue Q153 is modified to N5-methylglutamine.

This sequence belongs to the universal ribosomal protein uL3 family. In terms of assembly, part of the 50S ribosomal subunit. Forms a cluster with proteins L14 and L19. In terms of processing, methylated by PrmB.

In terms of biological role, one of the primary rRNA binding proteins, it binds directly near the 3'-end of the 23S rRNA, where it nucleates assembly of the 50S subunit. This is Large ribosomal subunit protein uL3 from Aromatoleum aromaticum (strain DSM 19018 / LMG 30748 / EbN1) (Azoarcus sp. (strain EbN1)).